The sequence spans 385 residues: GTP cyclohydrolase-2 (385 aa).

The tract at residues 1 to 189 is DHBP synthase-like; that stretch reads MYADAPSDSA…RDIADYRVHV (189 aa). The interval 190 to 385 is GTP cyclohydrolase II; sequence VRTLRRVAEA…TKAERSGHMF (196 aa). 240–244 lines the GTP pocket; it reads RLHSE. Cys245, Cys256, and Cys258 together coordinate Zn(2+). Residues Gln261, 283–285, and Thr305 contribute to the GTP site; that span reads EGR. Residue Asp317 is the Proton acceptor of the active site. Arg319 (nucleophile) is an active-site residue. GTP is bound by residues Thr340 and Lys345.

It in the N-terminal section; belongs to the DHBP synthase family. The protein in the C-terminal section; belongs to the GTP cyclohydrolase II family. The cofactor is Zn(2+).

The enzyme catalyses GTP + 4 H2O = 2,5-diamino-6-hydroxy-4-(5-phosphoribosylamino)-pyrimidine + formate + 2 phosphate + 3 H(+). The protein operates within cofactor biosynthesis; riboflavin biosynthesis; 5-amino-6-(D-ribitylamino)uracil from GTP: step 1/4. Catalyzes the conversion of GTP to 2,5-diamino-6-ribosylamino-4(3H)-pyrimidinone 5'-phosphate (DARP), formate and pyrophosphate. This chain is GTP cyclohydrolase-2 (ribA), found in Azospirillum brasilense.